The chain runs to 451 residues: Phosphoglucosamine mutase (451 aa).

Serine 102 serves as the catalytic Phosphoserine intermediate. 4 residues coordinate Mg(2+): serine 102, aspartate 243, aspartate 245, and aspartate 247. The residue at position 102 (serine 102) is a Phosphoserine.

The protein belongs to the phosphohexose mutase family. Mg(2+) is required as a cofactor. Activated by phosphorylation.

It carries out the reaction alpha-D-glucosamine 1-phosphate = D-glucosamine 6-phosphate. In terms of biological role, catalyzes the conversion of glucosamine-6-phosphate to glucosamine-1-phosphate. The polypeptide is Phosphoglucosamine mutase (Paramagnetospirillum magneticum (strain ATCC 700264 / AMB-1) (Magnetospirillum magneticum)).